A 159-amino-acid chain; its full sequence is Large ribosomal subunit protein uL22c (159 aa).

The protein belongs to the universal ribosomal protein uL22 family. As to quaternary structure, part of the 50S ribosomal subunit.

Its subcellular location is the plastid. It is found in the chloroplast. This protein binds specifically to 23S rRNA. In terms of biological role, the globular domain of the protein is located near the polypeptide exit tunnel on the outside of the subunit, while an extended beta-hairpin is found that lines the wall of the exit tunnel in the center of the 70S ribosome. The chain is Large ribosomal subunit protein uL22c (rpl22) from Ipomoea purpurea (Common morning glory).